The sequence spans 123 residues: Large ribosomal subunit protein bL12 (123 aa).

It belongs to the bacterial ribosomal protein bL12 family. Homodimer. Part of the ribosomal stalk of the 50S ribosomal subunit. Forms a multimeric L10(L12)X complex, where L10 forms an elongated spine to which 2 to 4 L12 dimers bind in a sequential fashion. Binds GTP-bound translation factors.

Forms part of the ribosomal stalk which helps the ribosome interact with GTP-bound translation factors. Is thus essential for accurate translation. In Neisseria perflava, this protein is Large ribosomal subunit protein bL12.